The following is a 2142-amino-acid chain: U5 small nuclear ribonucleoprotein 200 kDa helicase (2142 aa).

3 disordered regions span residues 52-74 (MGDR…RQKR), 211-234 (EESE…QDEG), and 366-396 (RQLD…DGGA). Basic and acidic residues predominate over residues 369 to 391 (DTGKSEDQEEGEARGSKRGKGDA). Residues 490-673 (KAALDSDENM…FLRVKPDKGL (184 aa)) enclose the Helicase ATP-binding 1 domain. Residue 503–510 (APTGAGKT) coordinates ATP. Residues 615-618 (DEIH) carry the DEIH box motif. The Helicase C-terminal 1 domain maps to 684–917 (SLEQQYIGVT…GTVQHLQDAV (234 aa)). In terms of domain architecture, SEC63 1 spans 981–1286 (VTDLGRIASH…GAETQLPVSF (306 aa)). Residues 1337 to 1511 (NAVYNSDENV…WLGCNPNATF (175 aa)) form the Helicase ATP-binding 2 domain. Residue 1350–1357 (APTGSGKM) coordinates ATP. Positions 1453-1456 (DELQ) match the DELQ box motif. The region spanning 1544–1752 (PVYNAILKYS…TIENKQDAVD (209 aa)) is the Helicase C-terminal 2 domain. Residues 1811-2128 (PLNLGMIAAY…GCDQEYKFSI (318 aa)) enclose the SEC63 2 domain.

Belongs to the helicase family. SKI2 subfamily.

The protein resides in the nucleus. The enzyme catalyses ATP + H2O = ADP + phosphate + H(+). Its function is as follows. Catalyzes the ATP-dependent unwinding of U4/U6 RNA duplices, an essential step in the assembly of a catalytically active spliceosome. Plays a role in pre-mRNA splicing. This chain is U5 small nuclear ribonucleoprotein 200 kDa helicase, found in Drosophila melanogaster (Fruit fly).